A 751-amino-acid polypeptide reads, in one-letter code: Photosystem I P700 chlorophyll a apoprotein A1 (751 aa).

A run of 8 helical transmembrane segments spans residues 73–96 (VFSA…FHGA), 159–182 (LYTT…FHYH), 198–222 (LNHH…HVSL), 294–312 (TAHH…GHMY), 349–372 (WHAQ…HHMY), 388–414 (LSLF…IFMV), 436–458 (AIIS…LYIH), and 533–551 (FLVH…LILL). [4Fe-4S] cluster contacts are provided by C575 and C584. A run of 2 helical transmembrane segments spans residues 591 to 612 (HVFL…HFSW) and 665 to 687 (LSAY…MFLF). H676 provides a ligand contact to chlorophyll a'. Chlorophyll a is bound by residues M684 and Y692. W693 contributes to the phylloquinone binding site. Residues 725–745 (AVGVAHYLLGGIATTWSFFLA) traverse the membrane as a helical segment.

It belongs to the PsaA/PsaB family. The PsaA/B heterodimer binds the P700 chlorophyll special pair and subsequent electron acceptors. PSI consists of a core antenna complex that captures photons, and an electron transfer chain that converts photonic excitation into a charge separation. The eukaryotic PSI reaction center is composed of at least 11 subunits. The cofactor is P700 is a chlorophyll a/chlorophyll a' dimer, A0 is one or more chlorophyll a, A1 is one or both phylloquinones and FX is a shared 4Fe-4S iron-sulfur center..

It is found in the plastid. Its subcellular location is the chloroplast thylakoid membrane. The enzyme catalyses reduced [plastocyanin] + hnu + oxidized [2Fe-2S]-[ferredoxin] = oxidized [plastocyanin] + reduced [2Fe-2S]-[ferredoxin]. In terms of biological role, psaA and PsaB bind P700, the primary electron donor of photosystem I (PSI), as well as the electron acceptors A0, A1 and FX. PSI is a plastocyanin/cytochrome c6-ferredoxin oxidoreductase, converting photonic excitation into a charge separation, which transfers an electron from the donor P700 chlorophyll pair to the spectroscopically characterized acceptors A0, A1, FX, FA and FB in turn. Oxidized P700 is reduced on the lumenal side of the thylakoid membrane by plastocyanin or cytochrome c6. The polypeptide is Photosystem I P700 chlorophyll a apoprotein A1 (Tetradesmus obliquus (Green alga)).